Here is a 209-residue protein sequence, read N- to C-terminus: Uracil phosphoribosyltransferase (209 aa).

5-phospho-alpha-D-ribose 1-diphosphate-binding positions include arginine 79, arginine 104, and 131-139 (DPMLATGNS). Uracil-binding positions include isoleucine 194 and 199–201 (GDA). Residue aspartate 200 coordinates 5-phospho-alpha-D-ribose 1-diphosphate.

Belongs to the UPRTase family. It depends on Mg(2+) as a cofactor.

The catalysed reaction is UMP + diphosphate = 5-phospho-alpha-D-ribose 1-diphosphate + uracil. It functions in the pathway pyrimidine metabolism; UMP biosynthesis via salvage pathway; UMP from uracil: step 1/1. Its activity is regulated as follows. Allosterically activated by GTP. Functionally, catalyzes the conversion of uracil and 5-phospho-alpha-D-ribose 1-diphosphate (PRPP) to UMP and diphosphate. This chain is Uracil phosphoribosyltransferase, found in Variovorax paradoxus (strain S110).